We begin with the raw amino-acid sequence, 197 residues long: Large ribosomal subunit protein bL17 (197 aa).

Residues 136–197 (RAAKKADAPQ…DAEKSSDTEK (62 aa)) form a disordered region. Residues 148–187 (VADEATDADESVEDEAPAQDDSADEVEAAADETPADDAEA) are compositionally biased toward acidic residues. Residues 188 to 197 (DAEKSSDTEK) show a composition bias toward basic and acidic residues.

The protein belongs to the bacterial ribosomal protein bL17 family. Part of the 50S ribosomal subunit. Contacts protein L32.

This is Large ribosomal subunit protein bL17 from Beutenbergia cavernae (strain ATCC BAA-8 / DSM 12333 / CCUG 43141 / JCM 11478 / NBRC 16432 / NCIMB 13614 / HKI 0122).